The primary structure comprises 377 residues: 5-hydroxytryptamine receptor 1D (377 aa).

A disordered region spans residues 1-23; sequence MSPLNQSAEGLPQEASNRSLNAT. Topologically, residues 1–38 are extracellular; sequence MSPLNQSAEGLPQEASNRSLNATETSEAWDPRTLQALK. N-linked (GlcNAc...) asparagine glycosylation is found at N5, N17, and N21. The chain crosses the membrane as a helical span at residues 39–64; that stretch reads ISLAVVLSVITLATVLSNAFVLTTIL. Residues 65–75 lie on the Cytoplasmic side of the membrane; the sequence is LTRKLHTPANY. Residues 76–97 form a helical membrane-spanning segment; that stretch reads LIGSLATTDLLVSILVMPISIA. At 98-109 the chain is on the extracellular side; sequence YTITHTWNFGQI. A helical membrane pass occupies residues 110–134; it reads LCDIWLSSDITCCTASILHLCVIAL. Cysteines 111 and 188 form a disulfide. Positions 118 and 122 each coordinate serotonin. Positions 135-137 match the DRY motif; important for ligand-induced conformation changes motif; sequence DRY. Residues 135–154 are Cytoplasmic-facing; it reads DRYWAITDALEYSKRRTAGH. The chain crosses the membrane as a helical span at residues 155 to 176; it reads AATMIAIVWAISICISIPPLFW. Over 177 to 194 the chain is Extracellular; it reads RQAKAQEEMSDCLVNTSQ. A helical transmembrane segment spans residues 195 to 218; that stretch reads ISYTIYSTCGAFYIPSVLLIILYG. Residues 219 to 300 are Cytoplasmic-facing; it reads RIYRAARNRI…ISAARERKAT (82 aa). Residues 301-326 traverse the membrane as a helical segment; the sequence is KILGIILGAFIICWLPFFVVSLVLPI. Residue S321 participates in serotonin binding. Residues 327-335 are Extracellular-facing; sequence CRDSCWIHP. A helical membrane pass occupies residues 336 to 359; that stretch reads ALFDFFTWLGYLNSLINPIIYTVF. The short motif at 352–356 is the NPxxY motif; important for ligand-induced conformation changes and signaling element; it reads NPIIY. The Cytoplasmic segment spans residues 360–377; that stretch reads NEEFRQAFQKIVPFRKAS.

This sequence belongs to the G-protein coupled receptor 1 family. As to quaternary structure, homodimer. Heterodimer with HTR1B. As to expression, detected in brain neocortex and caudate nucleus (at protein level).

It localises to the cell membrane. In terms of biological role, G-protein coupled receptor for 5-hydroxytryptamine (serotonin). Also functions as a receptor for ergot alkaloid derivatives, various anxiolytic and antidepressant drugs and other psychoactive substances. Ligand binding causes a conformation change that triggers signaling via guanine nucleotide-binding proteins (G proteins) and modulates the activity of downstream effectors, such as adenylate cyclase. HTR1D is coupled to G(i)/G(o) G alpha proteins and mediates inhibitory neurotransmission by inhibiting adenylate cyclase activity. Regulates the release of 5-hydroxytryptamine in the brain, and thereby affects neural activity. May also play a role in regulating the release of other neurotransmitters. May play a role in vasoconstriction. The sequence is that of 5-hydroxytryptamine receptor 1D from Homo sapiens (Human).